Here is a 506-residue protein sequence, read N- to C-terminus: MTQAVMLQGTASDVGKSVLAAGLCRIFYQDGLRTAPFKSQNMALNSGITSDGKEMGRAQIFQAEAAGITPDVRMNPVLLKPTSDRQAQVVLMGKVATNMDAVSYHDYKPRLREQILAVYNSLAQEYDVIVLEGAGSPAEINLRDRDIVNMGMAEMAQCPVILVADIDRGGVFAAIYGTLALLHKQERDRVKGVIINKFRGDVALLYSGIEQIESLTGVPVLGVMPWLDVDLEDEDGVALQNDKYRGNAPRDITIAIVQLPHISNFTDFNALAAQPDVRIRYIRRPEALTDADLVILPGSKNTLSDLAWLRESGMADAVLQTHRQGVPVMGICGGYQMLGDTIVDEVESGLGTQPGLGLLNTITRFAQDKITTQVNATMSGELPSWLAAAAGLPVRGYEIHMGETVLQEGCCTAMTLQKNGCSVADGAVTADGLAFGTYLHGLFDSDAFTRAVVNGLRARKGLAPWETTFCYAEHKARQFDLLAEAMRQHIDIDKIYTIMQQHQEPV.

In terms of domain architecture, GATase cobBQ-type spans 251-448 (DITIAIVQLP…LHGLFDSDAF (198 aa)). Cysteine 332 acts as the Nucleophile in catalysis. Residue histidine 440 is part of the active site.

Belongs to the CobB/CobQ family. CobQ subfamily.

Its pathway is cofactor biosynthesis; adenosylcobalamin biosynthesis. In terms of biological role, catalyzes amidations at positions B, D, E, and G on adenosylcobyrinic A,C-diamide. NH(2) groups are provided by glutamine, and one molecule of ATP is hydrogenolyzed for each amidation. The chain is Cobyric acid synthase from Salmonella choleraesuis (strain SC-B67).